A 176-amino-acid chain; its full sequence is Large ribosomal subunit protein eL20 (176 aa).

K11 is covalently cross-linked (Glycyl lysine isopeptide (Lys-Gly) (interchain with G-Cter in SUMO2)). At Y63 the chain carries Phosphotyrosine. S71 bears the Phosphoserine mark. Residue K76 is modified to N6-succinyllysine. S123 carries the phosphoserine modification. Glycyl lysine isopeptide (Lys-Gly) (interchain with G-Cter in SUMO2) cross-links involve residues K128 and K170.

This sequence belongs to the eukaryotic ribosomal protein eL20 family. In terms of assembly, component of the large ribosomal subunit. Binds IPO9 with high affinity.

It is found in the cytoplasm. Functionally, component of the large ribosomal subunit. The ribosome is a large ribonucleoprotein complex responsible for the synthesis of proteins in the cell. In Bos taurus (Bovine), this protein is Large ribosomal subunit protein eL20 (RPL18A).